Consider the following 453-residue polypeptide: Glutamyl-tRNA(Gln) amidotransferase subunit A (453 aa).

Catalysis depends on charge relay system residues Lys-56 and Ser-131. The active-site Acyl-ester intermediate is the Ser-155.

The protein belongs to the amidase family. GatA subfamily. As to quaternary structure, heterotrimer of A, B and C subunits.

The catalysed reaction is L-glutamyl-tRNA(Gln) + L-glutamine + ATP + H2O = L-glutaminyl-tRNA(Gln) + L-glutamate + ADP + phosphate + H(+). Allows the formation of correctly charged Gln-tRNA(Gln) through the transamidation of misacylated Glu-tRNA(Gln) in organisms which lack glutaminyl-tRNA synthetase. The reaction takes place in the presence of glutamine and ATP through an activated gamma-phospho-Glu-tRNA(Gln). In Campylobacter jejuni subsp. doylei (strain ATCC BAA-1458 / RM4099 / 269.97), this protein is Glutamyl-tRNA(Gln) amidotransferase subunit A.